The chain runs to 153 residues: 3-hydroxyacyl-[acyl-carrier-protein] dehydratase FabZ (153 aa).

Residue histidine 54 is part of the active site.

This sequence belongs to the thioester dehydratase family. FabZ subfamily.

Its subcellular location is the cytoplasm. It catalyses the reaction a (3R)-hydroxyacyl-[ACP] = a (2E)-enoyl-[ACP] + H2O. Functionally, involved in unsaturated fatty acids biosynthesis. Catalyzes the dehydration of short chain beta-hydroxyacyl-ACPs and long chain saturated and unsaturated beta-hydroxyacyl-ACPs. In Chlamydia muridarum (strain MoPn / Nigg), this protein is 3-hydroxyacyl-[acyl-carrier-protein] dehydratase FabZ.